The chain runs to 273 residues: Putative pyruvate, phosphate dikinase regulatory protein (273 aa).

An ADP-binding site is contributed by Gly151–Thr158.

Belongs to the pyruvate, phosphate/water dikinase regulatory protein family. PDRP subfamily.

It carries out the reaction N(tele)-phospho-L-histidyl/L-threonyl-[pyruvate, phosphate dikinase] + ADP = N(tele)-phospho-L-histidyl/O-phospho-L-threonyl-[pyruvate, phosphate dikinase] + AMP + H(+). It catalyses the reaction N(tele)-phospho-L-histidyl/O-phospho-L-threonyl-[pyruvate, phosphate dikinase] + phosphate + H(+) = N(tele)-phospho-L-histidyl/L-threonyl-[pyruvate, phosphate dikinase] + diphosphate. Bifunctional serine/threonine kinase and phosphorylase involved in the regulation of the pyruvate, phosphate dikinase (PPDK) by catalyzing its phosphorylation/dephosphorylation. The polypeptide is Putative pyruvate, phosphate dikinase regulatory protein (Desulfitobacterium hafniense (strain DSM 10664 / DCB-2)).